The sequence spans 456 residues: Glutamate-gated chloride channel (456 aa).

A signal peptide spans 1-22 (MGSGHYFWAILYFASLCSASLA). Topologically, residues 23–245 (NNAKINFREK…VDLLFKREFS (223 aa)) are extracellular. L-glutamate is bound by residues Arg71, Arg90, and Ser154. Residues Cys163 and Cys177 are joined by a disulfide bond. Ser183 lines the L-glutamate pocket. The cysteines at positions 222 and 233 are disulfide-linked. A helical membrane pass occupies residues 246 to 268 (YYLIQIYIPCCMLVIVSWVSFWL). Topologically, residues 269–273 (DQGAV) are cytoplasmic. Residues 274 to 295 (PARVSLGVTTLLTMATQTSGIN) traverse the membrane as a helical segment. The Extracellular segment spans residues 296–302 (ASLPPVS). A helical membrane pass occupies residues 303-323 (YTKAIDVWTGVCLTFVFGALL). Residues 324 to 426 (EFALVNYASR…RQCSRSKRID (103 aa)) lie on the Cytoplasmic side of the membrane. Residues 427-450 (VISRITFPLVFALFNLVYWSTYLF) traverse the membrane as a helical segment. The Extracellular segment spans residues 451-456 (REEEDE).

This sequence belongs to the ligand-gated ion channel (TC 1.A.9) family. Glutamate-gated chloride channel (TC 1.A.9.4) subfamily. In terms of assembly, pentamer. Homomultimer. In terms of tissue distribution, expressed in the medulla layers (at protein level). Expressed in all major ON pathway medulla neurons (Mi1, Tm3, Mi4, and Mi9) and in OFF pathway neurons (Tm1, Tm2, Tm4, and Tm9).

It is found in the postsynaptic cell membrane. The protein localises to the cell membrane. Glutamate binding triggers a rapidly reversible current, while the anti-helmintic drug ivermectin triggers a permanently open channel configuration. Inhibited by picrotoxin. In terms of biological role, glutamate-gated chloride channel subunit. Together with Gamma-aminobutyric acid receptor Rdl, plays an important role in the visual response by regulating the activity of ON/OFF-selective neurons. This Drosophila melanogaster (Fruit fly) protein is Glutamate-gated chloride channel (GluClalpha).